The sequence spans 166 residues: UPF0304 protein VF_1794 (166 aa).

This sequence belongs to the UPF0304 family.

The chain is UPF0304 protein VF_1794 from Aliivibrio fischeri (strain ATCC 700601 / ES114) (Vibrio fischeri).